The primary structure comprises 496 residues: Lysine--tRNA ligase (496 aa).

Mg(2+) is bound by residues Glu408 and Glu415.

The protein belongs to the class-II aminoacyl-tRNA synthetase family. As to quaternary structure, homodimer. It depends on Mg(2+) as a cofactor.

It is found in the cytoplasm. It carries out the reaction tRNA(Lys) + L-lysine + ATP = L-lysyl-tRNA(Lys) + AMP + diphosphate. This chain is Lysine--tRNA ligase, found in Legionella pneumophila (strain Corby).